Here is a 261-residue protein sequence, read N- to C-terminus: Mediator of RNA polymerase II transcription subunit 7 (261 aa).

2 disordered regions span residues 1 to 55 (MAEA…TPAE) and 224 to 250 (DSAS…ANSS). Basic and acidic residues-rich tracts occupy residues 23–45 (FTPD…EDGK) and 230–240 (GENDTAKRTTG). Residues 241 to 250 (DQDANNANSS) show a composition bias toward polar residues.

The protein belongs to the Mediator complex subunit 7 family. In terms of assembly, component of the Mediator complex.

The protein resides in the nucleus. Component of the Mediator complex, a coactivator involved in the regulated transcription of nearly all RNA polymerase II-dependent genes. Mediator functions as a bridge to convey information from gene-specific regulatory proteins to the basal RNA polymerase II transcription machinery. Mediator is recruited to promoters by direct interactions with regulatory proteins and serves as a scaffold for the assembly of a functional preinitiation complex with RNA polymerase II and the general transcription factors. The sequence is that of Mediator of RNA polymerase II transcription subunit 7 (med7) from Neosartorya fischeri (strain ATCC 1020 / DSM 3700 / CBS 544.65 / FGSC A1164 / JCM 1740 / NRRL 181 / WB 181) (Aspergillus fischerianus).